Here is a 493-residue protein sequence, read N- to C-terminus: Ribulose bisphosphate carboxylase large chain (493 aa).

Substrate is bound at residue asparagine 132. An S-nitrosocysteine modification is found at cysteine 181. A substrate-binding site is contributed by threonine 182. Lysine 184 functions as the Proton acceptor in the catalytic mechanism. Residue lysine 186 coordinates substrate. Mg(2+)-binding residues include lysine 210, aspartate 212, and glutamate 213. N6-carboxylysine is present on lysine 210. Histidine 302 serves as the catalytic Proton acceptor. Residues arginine 303, histidine 335, and serine 387 each contribute to the substrate site. Cysteine 460 carries the post-translational modification S-nitrosocysteine.

The protein belongs to the RuBisCO large chain family. Type I subfamily. Heterohexadecamer of 8 large chains and 8 small chains. Requires Mg(2+) as cofactor.

The protein resides in the plastid. Its subcellular location is the chloroplast. The catalysed reaction is 2 (2R)-3-phosphoglycerate + 2 H(+) = D-ribulose 1,5-bisphosphate + CO2 + H2O. It carries out the reaction D-ribulose 1,5-bisphosphate + O2 = 2-phosphoglycolate + (2R)-3-phosphoglycerate + 2 H(+). Its function is as follows. RuBisCO catalyzes two reactions: the carboxylation of D-ribulose 1,5-bisphosphate, the primary event in carbon dioxide fixation, as well as the oxidative fragmentation of the pentose substrate in the photorespiration process. Both reactions occur simultaneously and in competition at the same active site. Carbon dioxide and oxygen bind in the same pocket of the enzyme in a similar manner. The sequence is that of Ribulose bisphosphate carboxylase large chain from Galdieria sulphuraria (Red alga).